A 335-amino-acid polypeptide reads, in one-letter code: uncharacterized protein (335 aa).

Residue 28-35 coordinates ATP; it reads GPINSGKT.

The protein belongs to the archaeal ATPase family.

This is an uncharacterized protein from Pyrococcus abyssi (strain GE5 / Orsay).